The sequence spans 244 residues: tRNA pseudouridine synthase A (244 aa).

Catalysis depends on Asp52, which acts as the Nucleophile. Residue Tyr110 participates in substrate binding.

The protein belongs to the tRNA pseudouridine synthase TruA family. As to quaternary structure, homodimer.

It catalyses the reaction uridine(38/39/40) in tRNA = pseudouridine(38/39/40) in tRNA. Formation of pseudouridine at positions 38, 39 and 40 in the anticodon stem and loop of transfer RNAs. The protein is tRNA pseudouridine synthase A of Geobacter sulfurreducens (strain ATCC 51573 / DSM 12127 / PCA).